We begin with the raw amino-acid sequence, 255 residues long: Probable pyridoxal 5'-phosphate synthase subunit PDX2 (255 aa).

46 to 48 lines the L-glutamine pocket; that stretch reads GES. The active-site Nucleophile is Cys78. L-glutamine is bound by residues Arg108 and 142–143; that span reads IR. Residues His202 and Glu204 each act as charge relay system in the active site. Positions 225–255 are disordered; it reads GASSSSSKTIVSVGETSAGPEPAKPDLPIFQ.

This sequence belongs to the glutaminase PdxT/SNO family. In terms of assembly, interacts with PDX1.1 or PDX1.3, but not with PDX1.2. Binds to RPA2A. Strongly expressed in roots, stems, leaves and flowers.

It localises to the cytoplasm. The catalysed reaction is aldehydo-D-ribose 5-phosphate + D-glyceraldehyde 3-phosphate + L-glutamine = pyridoxal 5'-phosphate + L-glutamate + phosphate + 3 H2O + H(+). The enzyme catalyses L-glutamine + H2O = L-glutamate + NH4(+). The protein operates within cofactor biosynthesis; pyridoxal 5'-phosphate biosynthesis. Its function is as follows. Catalyzes the hydrolysis of glutamine to glutamate and ammonia as part of the biosynthesis of pyridoxal 5'-phosphate. The resulting ammonia molecule is channeled to the active site of PDX1. Involved in the indirect resistance to singlet oxygen-generating photosensitizers. The polypeptide is Probable pyridoxal 5'-phosphate synthase subunit PDX2 (PDX2) (Arabidopsis thaliana (Mouse-ear cress)).